A 510-amino-acid chain; its full sequence is UDP-N-acetylmuramoyl-tripeptide--D-alanyl-D-alanine ligase (510 aa).

136–142 (GSSGKTS) is a binding site for ATP.

Belongs to the MurCDEF family. MurF subfamily.

The protein localises to the cytoplasm. It catalyses the reaction D-alanyl-D-alanine + UDP-N-acetyl-alpha-D-muramoyl-L-alanyl-gamma-D-glutamyl-meso-2,6-diaminopimelate + ATP = UDP-N-acetyl-alpha-D-muramoyl-L-alanyl-gamma-D-glutamyl-meso-2,6-diaminopimeloyl-D-alanyl-D-alanine + ADP + phosphate + H(+). Its pathway is cell wall biogenesis; peptidoglycan biosynthesis. Involved in cell wall formation. Catalyzes the final step in the synthesis of UDP-N-acetylmuramoyl-pentapeptide, the precursor of murein. This is UDP-N-acetylmuramoyl-tripeptide--D-alanyl-D-alanine ligase from Mycobacterium bovis (strain ATCC BAA-935 / AF2122/97).